The following is a 193-amino-acid chain: Adenylate kinase (193 aa).

11 to 16 contributes to the ATP binding site; sequence GAGKGT. Residues 31-60 form an NMP region; it reads STGDLLRAEVKAQTPLGCQAKVYMDAGELV. AMP-binding positions include Thr-32, Arg-37, 58–60, 85–88, and Gln-92; these read ELV and GFPR. Residues 126–136 form an LID region; the sequence is ARGKEQGRSDD. Arg-127 contacts ATP. Positions 133 and 145 each coordinate AMP. Gln-173 provides a ligand contact to ATP.

Belongs to the adenylate kinase family. As to quaternary structure, monomer.

Its subcellular location is the cytoplasm. The catalysed reaction is AMP + ATP = 2 ADP. The protein operates within purine metabolism; AMP biosynthesis via salvage pathway; AMP from ADP: step 1/1. Its function is as follows. Catalyzes the reversible transfer of the terminal phosphate group between ATP and AMP. Plays an important role in cellular energy homeostasis and in adenine nucleotide metabolism. The chain is Adenylate kinase from Synechococcus sp. (strain JA-2-3B'a(2-13)) (Cyanobacteria bacterium Yellowstone B-Prime).